A 210-amino-acid chain; its full sequence is ATP-dependent Clp protease proteolytic subunit (210 aa).

Residue Ser-107 is the Nucleophile of the active site. His-132 is a catalytic residue.

Belongs to the peptidase S14 family. In terms of assembly, fourteen ClpP subunits assemble into 2 heptameric rings which stack back to back to give a disk-like structure with a central cavity, resembling the structure of eukaryotic proteasomes.

Its subcellular location is the cytoplasm. The catalysed reaction is Hydrolysis of proteins to small peptides in the presence of ATP and magnesium. alpha-casein is the usual test substrate. In the absence of ATP, only oligopeptides shorter than five residues are hydrolyzed (such as succinyl-Leu-Tyr-|-NHMec, and Leu-Tyr-Leu-|-Tyr-Trp, in which cleavage of the -Tyr-|-Leu- and -Tyr-|-Trp bonds also occurs).. Cleaves peptides in various proteins in a process that requires ATP hydrolysis. Has a chymotrypsin-like activity. Plays a major role in the degradation of misfolded proteins. The chain is ATP-dependent Clp protease proteolytic subunit from Azorhizobium caulinodans (strain ATCC 43989 / DSM 5975 / JCM 20966 / LMG 6465 / NBRC 14845 / NCIMB 13405 / ORS 571).